We begin with the raw amino-acid sequence, 989 residues long: MMESGVPPCAACGDDAHAACRACSYALCKACLDEDAAEGRTTCARCGGEYGAPDPAHGQGAVVEEEVEESHEPAAGGVRERVTMASQLSDHQDEGVHARTMSTHARTISSVSGVGSELNDESGKPIWKNRVESWKEKKKEKKASAKKAAAKAQAPPVEEQIMDEKDLTDAYEPLSRIIPISKNKLTPYRAVIIMRLVVLGLFFHYRITNPVYSAFGLWMTSVICEIWFGFSWILDQFPKWCPINRETYVDRLIARYGDGEDSGLAPVDFFVSTVDPLKEPPLITANTVLSILAVDYPVEKISCYVSDDGSAMLTFESLAETAEFARRWVPFCKKYSIEPRAPEFYFSQKIDYLKDKIHPSFVKERRAMKRDYEEYKVRINALVAKAQKTPEEGWIMQDGTPWPGNNPRDHPGMIQVFLGETGARDFDGNELPRLVYVSREKRPGYQHHKKAGAMNALVRVSAVLTNAPYILNLDCDHYVNNSKAVREAMCFMMDPSVGRDVCYVQFPQRFDGIDRSDRYANRNVVFFDVNMKGLDGLQGPVYVGTGCCFYRQALYGYGPPSLPALPKSSVCSWCCCCCPKKKAEKSEKEMHRDSRREDLESAIFNLREIDNYDEYERSMLISQMSFEKSFGLSSVFIESTLMENGGVPESANPSTLIKEAIHVISCGYEEKTEWGKEIGWIYGSVTEDILTGFKMHCRGWRSIYCMPIRPAFKGSAPINLSDRLHQVLRWALGSVEIFLSRHCPLWYGYGGGRLKWLQRLSYINTIVYPFTSLPLIAYCCLPAICLLTGKFIIPTLSNAATIWFLGLFISIIVTSVLELRWSGIGIEDWWRNEQFWVIGGVSAHLFAVFQGILKMIAGLDTNFTVTAKATDDTEFGELYVFKWTTVLIPPTSILVLNLVGVVAGFSDALNSGYESWGPLFGKVFFAMWVIMHLYPFLKGLMGRQNRTPTIVVLWSVLLASVFSLLWVKIDPFIGSSETTTTNSCANFDC.

Residues 1 to 184 (MMESGVPPCA…SRIIPISKNK (184 aa)) are Cytoplasmic-facing. Cys-9, Cys-12, Cys-20, Cys-23, Cys-28, Cys-31, Cys-43, and Cys-46 together coordinate Zn(2+). The RING-type; degenerate zinc finger occupies 9–47 (CAACGDDAHAACRACSYALCKACLDEDAAEGRTTCARCG). Basic residues predominate over residues 138–149 (KKEKKASAKKAA). Residues 138–158 (KKEKKASAKKAAAKAQAPPVE) are disordered. A helical transmembrane segment spans residues 185–205 (LTPYRAVIIMRLVVLGLFFHY). Residues 206-213 (RITNPVYS) lie on the Extracellular side of the membrane. Residues 214–234 (AFGLWMTSVICEIWFGFSWIL) form a helical membrane-spanning segment. At 235–772 (DQFPKWCPIN…INTIVYPFTS (538 aa)) the chain is on the cytoplasmic side. Residues Ser-272, Lys-278, Glu-279, and Asp-308 each contribute to the UDP-alpha-D-glucose site. Residue Asp-308 is part of the active site. Residues 362–389 (VKERRAMKRDYEEYKVRINALVAKAQKT) are a coiled coil. A UDP-alpha-D-glucose-binding site is contributed by Lys-449. Mn(2+) is bound by residues Lys-450 and Asp-474. Asp-688 is an active-site residue. A helical membrane pass occupies residues 773–793 (LPLIAYCCLPAICLLTGKFII). The Extracellular portion of the chain corresponds to 794–798 (PTLSN). The helical transmembrane segment at 799 to 819 (AATIWFLGLFISIIVTSVLEL) threads the bilayer. Residues 820 to 835 (RWSGIGIEDWWRNEQF) lie on the Cytoplasmic side of the membrane. The chain crosses the membrane as a helical span at residues 836-856 (WVIGGVSAHLFAVFQGILKMI). Over 857–884 (AGLDTNFTVTAKATDDTEFGELYVFKWT) the chain is Extracellular. Asn-862 is a glycosylation site (N-linked (GlcNAc...) asparagine). Residues 885-905 (TVLIPPTSILVLNLVGVVAGF) form a helical membrane-spanning segment. The Cytoplasmic portion of the chain corresponds to 906–916 (SDALNSGYESW). A helical transmembrane segment spans residues 917 to 937 (GPLFGKVFFAMWVIMHLYPFL). Residues 938 to 946 (KGLMGRQNR) lie on the Extracellular side of the membrane. Residues 947–967 (TPTIVVLWSVLLASVFSLLWV) form a helical membrane-spanning segment. Over 968 to 989 (KIDPFIGSSETTTTNSCANFDC) the chain is Cytoplasmic.

This sequence belongs to the glycosyltransferase 2 family. Plant cellulose synthase subfamily. Requires Mn(2+) as cofactor. Zn(2+) is required as a cofactor.

The protein localises to the cell membrane. The enzyme catalyses [(1-&gt;4)-beta-D-glucosyl](n) + UDP-alpha-D-glucose = [(1-&gt;4)-beta-D-glucosyl](n+1) + UDP + H(+). Its pathway is glycan metabolism; plant cellulose biosynthesis. In terms of biological role, catalytic subunit of cellulose synthase terminal complexes ('rosettes'), required for beta-1,4-glucan microfibril crystallization, a major mechanism of the cell wall formation. Involved in the secondary cell wall formation. This Oryza sativa subsp. japonica (Rice) protein is Cellulose synthase A catalytic subunit 4 [UDP-forming] (CESA4).